A 115-amino-acid polypeptide reads, in one-letter code: Large ribosomal subunit protein uL18 (115 aa).

The protein belongs to the universal ribosomal protein uL18 family. In terms of assembly, part of the 50S ribosomal subunit; part of the 5S rRNA/L5/L18/L25 subcomplex. Contacts the 5S and 23S rRNAs.

Functionally, this is one of the proteins that bind and probably mediate the attachment of the 5S RNA into the large ribosomal subunit, where it forms part of the central protuberance. The sequence is that of Large ribosomal subunit protein uL18 from Marinobacter nauticus (strain ATCC 700491 / DSM 11845 / VT8) (Marinobacter aquaeolei).